Consider the following 447-residue polypeptide: Probable glycosyltransferase 7 (447 aa).

The segment at 1–31 is disordered; the sequence is MRATTGARHLHPPWRRGLRHHRQSTMPPRAS. Residues 1–37 are Cytoplasmic-facing; it reads MRATTGARHLHPPWRRGLRHHRQSTMPPRASRGRLAD. A compositionally biased stretch (basic residues) spans 8 to 23; that stretch reads RHLHPPWRRGLRHHRQ. The chain crosses the membrane as a helical; Signal-anchor for type II membrane protein span at residues 38–60; that stretch reads AALFTAGAVLGSVLLLTLASPFS. The Lumenal portion of the chain corresponds to 61–447; it reads SSSSPSSGVG…LPFDHPTQTA (387 aa). N-linked (GlcNAc...) asparagine glycans are attached at residues asparagine 285 and asparagine 329.

It belongs to the glycosyltransferase 34 family.

Its subcellular location is the golgi apparatus membrane. Probable glycosyltransferase that may be involved in the biosynthesis of xyloglucan. This chain is Probable glycosyltransferase 7, found in Oryza sativa subsp. indica (Rice).